The primary structure comprises 351 residues: GTPase Obg (351 aa).

The Obg domain maps to 1-159; that stretch reads MKFLDQCKIY…RWVWLRLKLI (159 aa). Positions 160–327 constitute an OBG-type G domain; sequence ADAGLVGLPN…MLFELLRHIR (168 aa). Residues 166–173, 191–195, 212–215, 279–282, and 308–310 contribute to the GTP site; these read GLPNAGKS, FTTLT, DIPG, NKID, and SGA. Ser-173 and Thr-193 together coordinate Mg(2+).

The protein belongs to the TRAFAC class OBG-HflX-like GTPase superfamily. OBG GTPase family. In terms of assembly, monomer. It depends on Mg(2+) as a cofactor.

Its subcellular location is the cytoplasm. Its function is as follows. An essential GTPase which binds GTP, GDP and possibly (p)ppGpp with moderate affinity, with high nucleotide exchange rates and a fairly low GTP hydrolysis rate. Plays a role in control of the cell cycle, stress response, ribosome biogenesis and in those bacteria that undergo differentiation, in morphogenesis control. In Rhodospirillum centenum (strain ATCC 51521 / SW), this protein is GTPase Obg.